The primary structure comprises 489 residues: 5-hydroxytryptamine receptor 3A (489 aa).

The N-terminal stretch at Met1–Gly23 is a signal peptide. The Extracellular portion of the chain corresponds to Ser24–Arg246. Residues Asn109, Asn175, and Asn191 are each glycosylated (N-linked (GlcNAc...) asparagine). The cysteines at positions 162 and 176 are disulfide-linked. Residues Pro247–Pro273 traverse the membrane as a helical segment. Residues Asp274–Arg278 lie on the Cytoplasmic side of the membrane. A helical transmembrane segment spans residues Val279–Ser297. At Asp298–Thr307 the chain is on the extracellular side. The helical transmembrane segment at Pro308 to Ala326 threads the bilayer. Residues Glu327–Arg466 are Cytoplasmic-facing. Residues Ala425–Asp461 form an HA-stretch; determines single-channel conductance in 5-HT3 receptors region. The chain crosses the membrane as a helical span at residues Ile467–Trp486. Over His487–Ser489 the chain is Extracellular.

This sequence belongs to the ligand-gated ion channel (TC 1.A.9) family. 5-hydroxytryptamine receptor (TC 1.A.9.2) subfamily. HTR3A sub-subfamily. Forms homopentameric as well as heteropentameric serotonin-activated cation-selective channel complexes with HTR3B or HTR3C or HTR3D or HTR3E. The homomeric complex is functional but exhibits low conductance with modified voltage dependence, and decreased agonist and antagonist affinity. Heteropentameric complexes display properties which resemble that of neuronal serotonin-activated channels in vivo. Interacts with RIC3. Brain, spinal cord, and heart.

It is found in the postsynaptic cell membrane. It localises to the cell membrane. The catalysed reaction is Na(+)(in) = Na(+)(out). The enzyme catalyses K(+)(in) = K(+)(out). It catalyses the reaction Ca(2+)(in) = Ca(2+)(out). It carries out the reaction Mg(2+)(in) = Mg(2+)(out). In terms of biological role, forms serotonin (5-hydroxytryptamine/5-HT3)-activated cation-selective channel complexes, which when activated cause fast, depolarizing responses in neurons. The sequence is that of 5-hydroxytryptamine receptor 3A from Mus musculus (Mouse).